The chain runs to 944 residues: MAAVAAVAARRRRSWASLVLAFLGVCLGITLAVDRSNFKTCEESSFCKRQRSIRPGLSPYRALLDSLQLGPDSLTVHLIHEVTKVLLVLELQGLQKNMTRFRIDELEPRRPRYRVPDVLVADPPIARLSVSGRDENSVELTMAEGPYKIILTARPFRLDLLEDRSLLLSVNARGLLEFEHQRAPRVSQGSKDPAEGDGAQPEETPRDGDKPEETQGKAEKDEPGAWEETFKTHSDSKPYGPMSVGLDFSLPGMEHVYGIPEHADNLRLKVTEGGEPYRLYNLDVFQYELYNPMALYGSVPVLLAHNPHRDLGIFWLNAAETWVDISSNTAGKTLFGKMMDYLQGSGETPQTDVRWMSETGIIDVFLLLGPSISDVFRQYASLTGTQALPPLFSLGYHQSRWNYRDEADVLEVDQGFDDHNLPCDVIWLDIEHADGKRYFTWDPSRFPQPRTMLERLASKRRKLVAIVDPHIKVDSGYRVHEELRNLGLYVKTRDGSDYEGWCWPGSAGYPDFTNPTMRAWWANMFSYDNYEGSAPNLFVWNDMNEPSVFNGPEVTMLKDAQHYGGWEHRDVHNIYGLYVHMATADGLRQRSGGMERPFVLARAFFAGSQRFGAVWTGDNTAEWDHLKISIPMCLSLGLVGLSFCGADVGGFFKNPEPELLVRWYQMGAYQPFFRAHAHLDTGRREPWLLPSQHNDIIRDALGQRYSLLPFWYTLLYQAHREGIPVMRPLWVQYPQDVTTFNIDDQYLLGDALLVHPVSDSGAHGVQVYLPGQGEVWYDIQSYQKHHGPQTLYLPVTLSSIPVFQRGGTIVPRWMRVRRSSECMKDDPITLFVALSPQGTAQGELFLDDGHTFNYQTRQEFLLRRFSFSGNTLVSSSADPEGHFETPIWIERVVIIGAGKPAAVVLQTKGSPESRLSFQHDPETSVLVLRKPGINVASDWSIHLR.

A signal peptide spans 1 to 28; it reads MAAVAAVAARRRRSWASLVLAFLGVCLG. A disulfide bond links Cys41 and Cys47. Ser52 carries the post-translational modification Phosphoserine. Asn97 carries an N-linked (GlcNAc...) asparagine glycan. The segment at 181 to 238 is disordered; the sequence is QRAPRVSQGSKDPAEGDGAQPEETPRDGDKPEETQGKAEKDEPGAWEETFKTHSDSKP. Positions 203–236 are enriched in basic and acidic residues; the sequence is ETPRDGDKPEETQGKAEKDEPGAWEETFKTHSDS. Positions 283 and 429 each coordinate substrate. The active-site Nucleophile is the Asp542. Arg602 contacts substrate. Catalysis depends on Asp618, which acts as the Proton donor. A disulfide bridge connects residues Cys633 and Cys644. Residue His676 participates in substrate binding.

This sequence belongs to the glycosyl hydrolase 31 family. Heterodimer of a catalytic alpha subunit (GANAB) and a beta subunit (PRKCSH). Binds glycosylated PTPRC. In terms of tissue distribution, detected in placenta. Isoform 1 and isoform 2 are expressed in the kidney and liver.

It is found in the endoplasmic reticulum. The protein resides in the golgi apparatus. The protein localises to the melanosome. It catalyses the reaction N(4)-(alpha-D-Glc-(1-&gt;3)-alpha-D-Man-(1-&gt;2)-alpha-D-Man-(1-&gt;2)-alpha-D-Man-(1-&gt;3)-[alpha-D-Man-(1-&gt;2)-alpha-D-Man-(1-&gt;3)-[alpha-D-Man-(1-&gt;2)-alpha-D-Man-(1-&gt;6)]-alpha-D-Man-(1-&gt;6)]-beta-D-Man-(1-&gt;4)-beta-D-GlcNAc-(1-&gt;4)-beta-D-GlcNAc)-L-asparaginyl-[protein] + H2O = N(4)-(alpha-D-Man-(1-&gt;2)-alpha-D-Man-(1-&gt;2)-alpha-D-Man-(1-&gt;3)-[alpha-D-Man-(1-&gt;2)-alpha-D-Man-(1-&gt;3)-[alpha-D-Man-(1-&gt;2)-alpha-D-Man-(1-&gt;6)]-alpha-D-Man-(1-&gt;6)]-beta-D-Man-(1-&gt;4)-beta-D-GlcNAc-(1-&gt;4)-beta-D-GlcNAc)-L-asparaginyl-[protein] (N-glucan mannose isomer 9A1,2,3B1,2,3) + beta-D-glucose. The catalysed reaction is N(4)-(alpha-D-Glc-(1-&gt;3)-alpha-D-Glc-(1-&gt;3)-alpha-D-Man-(1-&gt;2)-alpha-D-Man-(1-&gt;2)-alpha-D-Man-(1-&gt;3)-[alpha-D-Man-(1-&gt;2)-alpha-D-Man-(1-&gt;3)-[alpha-D-Man-(1-&gt;2)-alpha-D-Man-(1-&gt;6)]-alpha-D-Man-(1-&gt;6)]-beta-D-Man-(1-&gt;4)-beta-D-GlcNAc-(1-&gt;4)-beta-D-GlcNAc)-L-asparaginyl-[protein] + H2O = N(4)-(alpha-D-Glc-(1-&gt;3)-alpha-D-Man-(1-&gt;2)-alpha-D-Man-(1-&gt;2)-alpha-D-Man-(1-&gt;3)-[alpha-D-Man-(1-&gt;2)-alpha-D-Man-(1-&gt;3)-[alpha-D-Man-(1-&gt;2)-alpha-D-Man-(1-&gt;6)]-alpha-D-Man-(1-&gt;6)]-beta-D-Man-(1-&gt;4)-beta-D-GlcNAc-(1-&gt;4)-beta-D-GlcNAc)-L-asparaginyl-[protein] + beta-D-glucose. It functions in the pathway glycan metabolism; N-glycan metabolism. With respect to regulation, inhibited by deoxynojirimycin. Functionally, catalytic subunit of glucosidase II that cleaves sequentially the 2 innermost alpha-1,3-linked glucose residues from the Glc(2)Man(9)GlcNAc(2) oligosaccharide precursor of immature glycoproteins. Required for PKD1/Polycystin-1 and PKD2/Polycystin-2 maturation and localization to the cell surface and cilia. This Homo sapiens (Human) protein is Neutral alpha-glucosidase AB.